The sequence spans 193 residues: Fe/S biogenesis protein NfuA (193 aa).

[4Fe-4S] cluster-binding residues include Cys-149 and Cys-152.

This sequence belongs to the NfuA family. In terms of assembly, homodimer. [4Fe-4S] cluster serves as cofactor.

Its function is as follows. Involved in iron-sulfur cluster biogenesis. Binds a 4Fe-4S cluster, can transfer this cluster to apoproteins, and thereby intervenes in the maturation of Fe/S proteins. Could also act as a scaffold/chaperone for damaged Fe/S proteins. The chain is Fe/S biogenesis protein NfuA from Psychromonas ingrahamii (strain DSM 17664 / CCUG 51855 / 37).